A 63-amino-acid chain; its full sequence is 2-hydroxymuconate tautomerase (63 aa).

Pro2 functions as the Proton acceptor; via imino nitrogen in the catalytic mechanism.

It belongs to the 4-oxalocrotonate tautomerase family. Homohexamer.

It carries out the reaction (2Z,4E)-2-hydroxyhexa-2,4-dienedioate = (3E)-2-oxohex-3-enedioate. It functions in the pathway aromatic compound metabolism; salicylate degradation. Catalyzes the ketonization of 2-hydroxymuconate stereoselectively to yield 2-oxo-3-hexenedioate. This is 2-hydroxymuconate tautomerase (nahJ) from Stutzerimonas stutzeri (Pseudomonas stutzeri).